The chain runs to 182 residues: Probable tyrosine phosphatase protein H4 (182 aa).

The Tyrosine-protein phosphatase domain occupies 1-182; the sequence is MEINKFICSQ…TVLKIQKSKI (182 aa). The active-site Phosphocysteine intermediate is the cysteine 142.

This sequence belongs to the protein-tyrosine phosphatase family.

It carries out the reaction O-phospho-L-tyrosyl-[protein] + H2O = L-tyrosyl-[protein] + phosphate. In Microplitis demolitor (Parasitoid wasp), this protein is Probable tyrosine phosphatase protein H4 (H5).